Consider the following 139-residue polypeptide: D-ribose pyranase (139 aa).

Residue His-20 is the Proton donor of the active site. Residues Asp-28, His-106, and 128-130 (YAN) contribute to the substrate site.

It belongs to the RbsD / FucU family. RbsD subfamily. Homodecamer.

It is found in the cytoplasm. It catalyses the reaction beta-D-ribopyranose = beta-D-ribofuranose. Its pathway is carbohydrate metabolism; D-ribose degradation; D-ribose 5-phosphate from beta-D-ribopyranose: step 1/2. Its function is as follows. Catalyzes the interconversion of beta-pyran and beta-furan forms of D-ribose. The chain is D-ribose pyranase from Glaesserella parasuis serovar 5 (strain SH0165) (Haemophilus parasuis).